A 282-amino-acid polypeptide reads, in one-letter code: Probable endonuclease LCL3 (282 aa).

Residues 55–71 (SNLIPTVLLTSGILFAV) traverse the membrane as a helical segment. The TNase-like domain occupies 95–256 (RSILGKVTSV…KKKGKGLWKA (162 aa)). Residue Arg-144 is part of the active site. Asp-149 provides a ligand contact to Ca(2+). Catalysis depends on residues Glu-152 and Arg-192.

This sequence belongs to the LCL3 family.

It localises to the mitochondrion. The protein localises to the membrane. In Arthroderma otae (strain ATCC MYA-4605 / CBS 113480) (Microsporum canis), this protein is Probable endonuclease LCL3 (LCL3).